A 287-amino-acid chain; its full sequence is Hydroxysteroid 11-beta-dehydrogenase 1-like protein (287 aa).

Residues 1–15 (MKVLLLTGLGALFFA) form the signal peptide. NADP(+)-binding positions include 36 to 62 (GVSAGIGEELAYHYARLGSHLVLTAHT), 87 to 88 (DM), and 114 to 116 (NHL). Residue Ser165 participates in substrate binding. The Proton acceptor role is filled by Tyr178. NADP(+) contacts are provided by residues 178-182 (YSAAK) and 211-217 (GLRDRAS). N-linked (GlcNAc...) asparagine glycosylation occurs at Asn280.

It belongs to the short-chain dehydrogenases/reductases (SDR) family.

It localises to the secreted. It catalyses the reaction cortisone + NADPH + H(+) = cortisol + NADP(+). Functionally, unidirectional NADP(+)-dependent cortisol dehydrogenase (in vitro). This is Hydroxysteroid 11-beta-dehydrogenase 1-like protein (HSD11B1L) from Bos taurus (Bovine).